The chain runs to 378 residues: Chorismate synthase (378 aa).

Residue Arg-49 participates in NADP(+) binding. Residues 126 to 128 (RAS), Gly-287, 302 to 306 (KPTAT), and Arg-328 contribute to the FMN site.

It belongs to the chorismate synthase family. As to quaternary structure, homotetramer. Requires FMNH2 as cofactor.

The enzyme catalyses 5-O-(1-carboxyvinyl)-3-phosphoshikimate = chorismate + phosphate. The protein operates within metabolic intermediate biosynthesis; chorismate biosynthesis; chorismate from D-erythrose 4-phosphate and phosphoenolpyruvate: step 7/7. Functionally, catalyzes the anti-1,4-elimination of the C-3 phosphate and the C-6 proR hydrogen from 5-enolpyruvylshikimate-3-phosphate (EPSP) to yield chorismate, which is the branch point compound that serves as the starting substrate for the three terminal pathways of aromatic amino acid biosynthesis. This reaction introduces a second double bond into the aromatic ring system. The polypeptide is Chorismate synthase (Synechococcus sp. (strain JA-3-3Ab) (Cyanobacteria bacterium Yellowstone A-Prime)).